The chain runs to 131 residues: Small ribosomal subunit protein uS11 (131 aa).

Belongs to the universal ribosomal protein uS11 family. Part of the 30S ribosomal subunit. Interacts with proteins S7 and S18. Binds to IF-3.

In terms of biological role, located on the platform of the 30S subunit, it bridges several disparate RNA helices of the 16S rRNA. Forms part of the Shine-Dalgarno cleft in the 70S ribosome. The polypeptide is Small ribosomal subunit protein uS11 (Granulibacter bethesdensis (strain ATCC BAA-1260 / CGDNIH1)).